A 262-amino-acid polypeptide reads, in one-letter code: Small ribosomal subunit protein eS4x (262 aa).

The S4 RNA-binding domain maps to 42-104 (LPLVLIIRNR…TNENFRLLYD (63 aa)).

Belongs to the eukaryotic ribosomal protein eS4 family.

It localises to the cytoplasm. The sequence is that of Small ribosomal subunit protein eS4x (RPS4D) from Arabidopsis thaliana (Mouse-ear cress).